Consider the following 593-residue polypeptide: Mitosis inducer protein kinase cdr1 (593 aa).

The region spanning 12 to 258 (WRLGKTLGTG…IPEVFSHPFL (247 aa)) is the Protein kinase domain. Residues 18-26 (LGTGSTSCV) and K41 contribute to the ATP site. D128 (proton acceptor) is an active-site residue. At S550 the chain carries Phosphoserine.

Belongs to the protein kinase superfamily. CAMK Ser/Thr protein kinase family. NIM1 subfamily. As to quaternary structure, interacts with msp1.

The catalysed reaction is L-seryl-[protein] + ATP = O-phospho-L-seryl-[protein] + ADP + H(+). It catalyses the reaction L-threonyl-[protein] + ATP = O-phospho-L-threonyl-[protein] + ADP + H(+). This protein, a dose-dependent mitotic inducer, appears to function as a negative regulator of mitosis inhibitor wee1 by phosphorylating and inactivating it. This is Mitosis inducer protein kinase cdr1 (cdr1) from Schizosaccharomyces pombe (strain 972 / ATCC 24843) (Fission yeast).